The primary structure comprises 1290 residues: Nonribosomal peptide synthetase 6 (1290 aa).

Residues 1–27 (MTAIDVPWLSTPRRDNSHGTRSNSSCQ) are disordered. The interval 260–657 (SYQELDCQAS…AQVEHHLRSC (398 aa)) is adenylation. One can recognise a Carrier domain in the interval 775 to 851 (APETELERKL…GLAQTHRHPV (77 aa)). S812 bears the O-(pantetheine 4'-phosphoryl)serine mark. The disordered stretch occupies residues 846-870 (THRHPVRRAEVPRSSHDPDPFGRVR). A compositionally biased stretch (basic and acidic residues) spans 852–870 (RRAEVPRSSHDPDPFGRVR). The segment at 914–1162 (GGQLDPEQLR…PCMNIIPVRV (249 aa)) is condensation.

This sequence belongs to the NRP synthetase family.

In terms of biological role, nonribosomal peptide synthesis (NRPS) is a key mechanism responsible for the biosynthesis of bioactive metabolites which are potentially contributing to organismal virulence. The sequence is that of Nonribosomal peptide synthetase 6 (NRPS6) from Aspergillus fumigatus (strain ATCC MYA-4609 / CBS 101355 / FGSC A1100 / Af293) (Neosartorya fumigata).